The primary structure comprises 329 residues: Malate dehydrogenase (329 aa).

Position 12 to 18 (12 to 18 (GAAGQIG)) interacts with NAD(+). Arg93 and Arg99 together coordinate substrate. NAD(+)-binding positions include Asn106, Gln113, and 130–132 (TGN). Substrate is bound by residues Asn132 and Arg163. His188 serves as the catalytic Proton acceptor.

It belongs to the LDH/MDH superfamily. MDH type 2 family.

It catalyses the reaction (S)-malate + NAD(+) = oxaloacetate + NADH + H(+). Functionally, catalyzes the reversible oxidation of malate to oxaloacetate. The protein is Malate dehydrogenase of Mycobacterium bovis (strain ATCC BAA-935 / AF2122/97).